Consider the following 367-residue polypeptide: Queuine tRNA-ribosyltransferase (367 aa).

D92 acts as the Proton acceptor in catalysis. Residues D92–F96, D146, Q188, and G215 each bind substrate. Residues G246–D252 form an RNA binding region. D265 (nucleophile) is an active-site residue. Zn(2+) contacts are provided by C303, C305, C308, and H334.

Belongs to the queuine tRNA-ribosyltransferase family. In terms of assembly, homodimer. Within each dimer, one monomer is responsible for RNA recognition and catalysis, while the other monomer binds to the replacement base PreQ1. Zn(2+) is required as a cofactor.

It carries out the reaction 7-aminomethyl-7-carbaguanine + guanosine(34) in tRNA = 7-aminomethyl-7-carbaguanosine(34) in tRNA + guanine. The protein operates within tRNA modification; tRNA-queuosine biosynthesis. Catalyzes the base-exchange of a guanine (G) residue with the queuine precursor 7-aminomethyl-7-deazaguanine (PreQ1) at position 34 (anticodon wobble position) in tRNAs with GU(N) anticodons (tRNA-Asp, -Asn, -His and -Tyr). Catalysis occurs through a double-displacement mechanism. The nucleophile active site attacks the C1' of nucleotide 34 to detach the guanine base from the RNA, forming a covalent enzyme-RNA intermediate. The proton acceptor active site deprotonates the incoming PreQ1, allowing a nucleophilic attack on the C1' of the ribose to form the product. After dissociation, two additional enzymatic reactions on the tRNA convert PreQ1 to queuine (Q), resulting in the hypermodified nucleoside queuosine (7-(((4,5-cis-dihydroxy-2-cyclopenten-1-yl)amino)methyl)-7-deazaguanosine). The protein is Queuine tRNA-ribosyltransferase of Francisella tularensis subsp. tularensis (strain FSC 198).